A 276-amino-acid chain; its full sequence is Rhomboid protease GlpG (276 aa).

6 helical membrane-spanning segments follow: residues 94–114 (GPVTWVMMIACVVVFIAMQIL), 142–162 (ALMHFSLMHILFNLLWWWYLG), 169–189 (LGSGKLIVITLISALLSGYVQ), 192–212 (FSGPWFGGLSGVVYALMGYVW), 229–249 (LIIFALIWIVAGWFDLFGMSM), and 250–270 (ANGAHIAGLAVGLAMAFVDSL). Catalysis depends on Ser201, which acts as the Nucleophile. His254 is a catalytic residue.

This sequence belongs to the peptidase S54 family.

It is found in the cell inner membrane. The catalysed reaction is Cleaves type-1 transmembrane domains using a catalytic dyad composed of serine and histidine that are contributed by different transmembrane domains.. Rhomboid-type serine protease that catalyzes intramembrane proteolysis. The protein is Rhomboid protease GlpG of Shigella flexneri serotype 5b (strain 8401).